The primary structure comprises 326 residues: Microtubule-associated protein RP/EB family member 2 (326 aa).

Ser9 carries the post-translational modification Phosphoserine. Positions 56-158 (TMSRHDIIAW…FIQWFKKFYD (103 aa)) constitute a Calponin-homology (CH) domain. The residue at position 166 (Tyr166) is a Phosphotyrosine. Disordered regions lie at residues 170 to 239 (EARQ…DKDL) and 297 to 326 (YASD…QEEY). The tract at residues 186–326 (QIFNLPKKSH…DQQPQQQEEY (141 aa)) is DCTN1-binding. A compositionally biased stretch (low complexity) spans 199–233 (SPTAGAAKSSPASKPGSTPSRPSSAKRASSSGSAS). Ser218 and Ser235 each carry phosphoserine. The EB1 C-terminal domain maps to 235–305 (SDKDLETQVI…LYASDEQEGQ (71 aa)). Residues 258–301 (EGVEKERDFYFGKLREIELLCQEHGQENDDLVQRLMEVLYASDE) form an APC-binding region. Positions 300-312 (DEQEGQTEEPEAE) are enriched in acidic residues. Residues 317-326 (DQQPQQQEEY) show a composition bias toward low complexity.

The protein belongs to the MAPRE family. In terms of assembly, interacts with DCTN1. Interacts with APC (via C-terminal). Interacts with monomeric and polymerized tubulin. Interacts with SLAIN1. Interacts (via the N-terminal region) with BAG1. Interacts with ASB14. In terms of processing, ubiquitinated in an ASB14-dependent manner; leading to proteasomal degradation. Post-translationally, phosphorylated at Ser-235 by CK2 leading to enhanced cell adhesion. Phosphorylated by CDK1 and AURKB during mitosis reduces the binding affinity of MAPRE2 for microtubules. Expressed during early stages of apico-basal epithelial differentiation but down-regulated in most cells at later stages.

The protein localises to the cytoplasm. It is found in the cytoskeleton. It localises to the spindle. Functionally, adapter protein that is involved in microtubule polymerization, and spindle function by stabilizing microtubules and anchoring them at centrosomes. Therefore, ensures mitotic progression and genome stability. Acts as a central regulator of microtubule reorganization in apico-basal epithelial differentiation. Plays a role during oocyte meiosis by regulating microtubule dynamics. Participates in neurite growth by interacting with plexin B3/PLXNB3 and microtubule reorganization during apico-basal epithelial differentiation. Plays also an essential role for cell migration and focal adhesion dynamics. Mechanistically, recruits HAX1 to microtubules in order to regulate focal adhesion dynamics. This is Microtubule-associated protein RP/EB family member 2 (Mapre2) from Mus musculus (Mouse).